We begin with the raw amino-acid sequence, 633 residues long: Chaperone protein HtpG (633 aa).

Residues 1–341 (MTAPHETMSF…SADLPLNVSR (341 aa)) are a; substrate-binding. The tract at residues 342–562 (ELLQESRDVK…EGDMSGYLQR (221 aa)) is b. Positions 563–633 (LLKQAGQKAP…YVQRVNKLLA (71 aa)) are c.

Belongs to the heat shock protein 90 family. Homodimer.

It is found in the cytoplasm. Molecular chaperone. Has ATPase activity. This chain is Chaperone protein HtpG, found in Cupriavidus necator (strain ATCC 17699 / DSM 428 / KCTC 22496 / NCIMB 10442 / H16 / Stanier 337) (Ralstonia eutropha).